The following is a 428-amino-acid chain: MTTISDIYAREILDSRGNPTVEVEVFLESGGWGRAAVPSGASTGAYEAVELRDKDPKRYGGKGVLDAVNNINAIIAPELVGSDALDQREIDRQLIEMDGTPNKGKLGANAILGVSLAVAKAAADALGLPLYRYLGGVNAHTLPVPMMNILNGGKHADNNVDIQEFMVMPAGASDFASALRMGAEVFHSLKAVLQSKGLNTAVGDEGGFAPNLRSNVEAIEVLLEAIAKAGYEPGKDCFIALDPASTELYKDGKYVFAGEGVTRTSDEMVEFWASLVDKYPIISIEDGLAEDDWEGWQNLTKRLGHKVQLVGDDLFVTNTERLSRGIEMGAANAILIKVNQIGTLTETLEAIEMAKKAGYTAVVSHRSGETEDTTIADIVVAVNAGQIKTGAPSRTERVAKYNQLLRIEEELDAAALYPGLKAFYNLKK.

Position 163 (glutamine 163) interacts with (2R)-2-phosphoglycerate. Residue glutamate 205 is the Proton donor of the active site. Mg(2+) contacts are provided by aspartate 242, glutamate 285, and aspartate 312. Lysine 337, arginine 366, serine 367, and lysine 388 together coordinate (2R)-2-phosphoglycerate. Lysine 337 functions as the Proton acceptor in the catalytic mechanism.

It belongs to the enolase family. Requires Mg(2+) as cofactor.

It localises to the cytoplasm. The protein resides in the secreted. It is found in the cell surface. The enzyme catalyses (2R)-2-phosphoglycerate = phosphoenolpyruvate + H2O. It participates in carbohydrate degradation; glycolysis; pyruvate from D-glyceraldehyde 3-phosphate: step 4/5. Catalyzes the reversible conversion of 2-phosphoglycerate (2-PG) into phosphoenolpyruvate (PEP). It is essential for the degradation of carbohydrates via glycolysis. The polypeptide is Enolase (Moorella thermoacetica (strain ATCC 39073 / JCM 9320)).